A 227-amino-acid chain; its full sequence is Small ribosomal subunit protein uS3 (227 aa).

In terms of domain architecture, KH type-2 spans Val39–Arg107.

This sequence belongs to the universal ribosomal protein uS3 family. In terms of assembly, part of the 30S ribosomal subunit. Forms a tight complex with proteins S10 and S14.

In terms of biological role, binds the lower part of the 30S subunit head. Binds mRNA in the 70S ribosome, positioning it for translation. This Coxiella burnetii (strain CbuK_Q154) (Coxiella burnetii (strain Q154)) protein is Small ribosomal subunit protein uS3.